The chain runs to 119 residues: MGKMHTSELLKHIYDINLSYLLLAQRLISQDKASAMFRLGISEEMASTLGDLTLPQMVKLAETNQLVCQFRFQDHQSITRLTQESRVDDLQQIHTGILLSTRLLNEASGTEDVARKKRA.

Belongs to the FlhD family. In terms of assembly, homodimer; disulfide-linked. Forms a heterohexamer composed of two FlhC and four FlhD subunits. Each FlhC binds a FlhD dimer, forming a heterotrimer, and a hexamer assembles by dimerization of two heterotrimers.

It localises to the cytoplasm. Its function is as follows. Functions in complex with FlhC as a master transcriptional regulator that regulates transcription of several flagellar and non-flagellar operons by binding to their promoter region. Activates expression of class 2 flagellar genes, including fliA, which is a flagellum-specific sigma factor that turns on the class 3 genes. Also regulates genes whose products function in a variety of physiological pathways. The protein is Flagellar transcriptional regulator FlhD of Cronobacter sakazakii (strain ATCC BAA-894) (Enterobacter sakazakii).